Reading from the N-terminus, the 128-residue chain is Ribosome-binding factor A (128 aa).

Belongs to the RbfA family. In terms of assembly, monomer. Binds 30S ribosomal subunits, but not 50S ribosomal subunits or 70S ribosomes.

Its subcellular location is the cytoplasm. Its function is as follows. One of several proteins that assist in the late maturation steps of the functional core of the 30S ribosomal subunit. Associates with free 30S ribosomal subunits (but not with 30S subunits that are part of 70S ribosomes or polysomes). Required for efficient processing of 16S rRNA. May interact with the 5'-terminal helix region of 16S rRNA. This chain is Ribosome-binding factor A, found in Herminiimonas arsenicoxydans.